The sequence spans 376 residues: Erythronate-4-phosphate dehydrogenase (376 aa).

The substrate site is built by Ser45 and Thr66. Residues Asp146 and Thr175 each coordinate NAD(+). Residue Arg209 is part of the active site. Asp233 lines the NAD(+) pocket. Glu238 is an active-site residue. The Proton donor role is filled by His255. Gly258 provides a ligand contact to NAD(+). Tyr259 is a binding site for substrate.

This sequence belongs to the D-isomer specific 2-hydroxyacid dehydrogenase family. PdxB subfamily. Homodimer.

The protein resides in the cytoplasm. The catalysed reaction is 4-phospho-D-erythronate + NAD(+) = (R)-3-hydroxy-2-oxo-4-phosphooxybutanoate + NADH + H(+). It functions in the pathway cofactor biosynthesis; pyridoxine 5'-phosphate biosynthesis; pyridoxine 5'-phosphate from D-erythrose 4-phosphate: step 2/5. Its function is as follows. Catalyzes the oxidation of erythronate-4-phosphate to 3-hydroxy-2-oxo-4-phosphonooxybutanoate. The sequence is that of Erythronate-4-phosphate dehydrogenase from Baumannia cicadellinicola subsp. Homalodisca coagulata.